The chain runs to 38 residues: Large ribosomal subunit protein bL36 (38 aa).

The protein belongs to the bacterial ribosomal protein bL36 family.

This is Large ribosomal subunit protein bL36 from Bacteroides fragilis (strain ATCC 25285 / DSM 2151 / CCUG 4856 / JCM 11019 / LMG 10263 / NCTC 9343 / Onslow / VPI 2553 / EN-2).